The sequence spans 114 residues: T cell receptor beta variable 19 (114 aa).

The first 21 residues, 1 to 21 (MSNQVLCCVVLCLLGANTVDG), serve as a signal peptide directing secretion. The Ig-like domain maps to 22 to 114 (GITQSPKYLF…TAFYLCASSI (93 aa)). An N-linked (GlcNAc...) asparagine glycan is attached at N37. C42 and C110 are joined by a disulfide.

In terms of assembly, alpha-beta TR is a heterodimer composed of an alpha and beta chain; disulfide-linked. The alpha-beta TR is associated with the transmembrane signaling CD3 coreceptor proteins to form the TR-CD3 (TcR or TCR). The assembly of alpha-beta TR heterodimers with CD3 occurs in the endoplasmic reticulum where a single alpha-beta TR heterodimer associates with one CD3D-CD3E heterodimer, one CD3G-CD3E heterodimer and one CD247 homodimer forming a stable octameric structure. CD3D-CD3E and CD3G-CD3E heterodimers preferentially associate with TR alpha and TR beta chains, respectively. The association of the CD247 homodimer is the last step of TcR assembly in the endoplasmic reticulum and is required for transport to the cell surface. (Microbial infection) Interacts with Staphylococcus aureus enterotoxin type B/SEB.

Its subcellular location is the cell membrane. In terms of biological role, v region of the variable domain of T cell receptor (TR) beta chain that participates in the antigen recognition. Alpha-beta T cell receptors are antigen specific receptors which are essential to the immune response and are present on the cell surface of T lymphocytes. Recognize peptide-major histocompatibility (MH) (pMH) complexes that are displayed by antigen presenting cells (APC), a prerequisite for efficient T cell adaptive immunity against pathogens. Binding of alpha-beta TR to pMH complex initiates TR-CD3 clustering on the cell surface and intracellular activation of LCK that phosphorylates the ITAM motifs of CD3G, CD3D, CD3E and CD247 enabling the recruitment of ZAP70. In turn ZAP70 phosphorylates LAT, which recruits numerous signaling molecules to form the LAT signalosome. The LAT signalosome propagates signal branching to three major signaling pathways, the calcium, the mitogen-activated protein kinase (MAPK) kinase and the nuclear factor NF-kappa-B (NF-kB) pathways, leading to the mobilization of transcription factors that are critical for gene expression and essential for T cell growth and differentiation. The T cell repertoire is generated in the thymus, by V-(D)-J rearrangement. This repertoire is then shaped by intrathymic selection events to generate a peripheral T cell pool of self-MH restricted, non-autoaggressive T cells. Post-thymic interaction of alpha-beta TR with the pMH complexes shapes TR structural and functional avidity. This is T cell receptor beta variable 19 from Homo sapiens (Human).